A 332-amino-acid polypeptide reads, in one-letter code: Solute carrier family 25 member 16 (332 aa).

Solcar repeat units lie at residues 34 to 120, 128 to 216, and 238 to 328; these read FYWL…YKTF, SGHV…LKSV, and LKTH…MKQF. Helical transmembrane passes span 37 to 57, 88 to 108, 134 to 154, 191 to 211, 244 to 264, and 299 to 319; these read LRSFLAGGIAGCCAKTTVAPL, GYLGLYKGNGAMMIRIFPYGA, LMAGSMAGMTAVICTYPLDVV, GLMPTILGMAPYAGVSFFTFG, LLCGGVAGAIAQTISYPFDVT, and GLYRGLSLNYIRCIPSQAVAF.

Belongs to the mitochondrial carrier (TC 2.A.29) family.

It is found in the mitochondrion inner membrane. Its function is as follows. May be involved in the transport of coenzyme A in the mitochondrial matrix. Very little is known about the physiological function of this carrier. This is Solute carrier family 25 member 16 from Mus musculus (Mouse).